The chain runs to 140 residues: Sec-independent protein translocase protein TatB (140 aa).

Residues 2–22 traverse the membrane as a helical segment; sequence LPGIGFSELLLIGLAALIIIG. The disordered stretch occupies residues 90 to 140; the sequence is VNSAVMREHPVSPPPPATPPAPPAELPPEAAPHADSQNAPPEADPAKGDRT. The span at 100–119 shows a compositional bias: pro residues; sequence VSPPPPATPPAPPAELPPEA.

The protein belongs to the TatB family. As to quaternary structure, the Tat system comprises two distinct complexes: a TatABC complex, containing multiple copies of TatA, TatB and TatC subunits, and a separate TatA complex, containing only TatA subunits. Substrates initially bind to the TatABC complex, which probably triggers association of the separate TatA complex to form the active translocon.

It is found in the cell inner membrane. Its function is as follows. Part of the twin-arginine translocation (Tat) system that transports large folded proteins containing a characteristic twin-arginine motif in their signal peptide across membranes. Together with TatC, TatB is part of a receptor directly interacting with Tat signal peptides. TatB may form an oligomeric binding site that transiently accommodates folded Tat precursor proteins before their translocation. In Hyphomonas neptunium (strain ATCC 15444), this protein is Sec-independent protein translocase protein TatB.